Here is a 295-residue protein sequence, read N- to C-terminus: Ankyrin repeat and SOCS box protein 17 (295 aa).

Residues 146–176 (SGITPLFYVAQTRQSNIFKILLQYGILEREK) form an ANK repeat. The SOCS box domain maps to 232 to 295 (LGRRPIISNW…RLQNYLNLEI (64 aa)).

The protein belongs to the ankyrin SOCS box (ASB) family.

Its pathway is protein modification; protein ubiquitination. Functionally, may be a substrate-recognition component of a SCF-like ECS (Elongin-Cullin-SOCS-box protein) E3 ubiquitin-protein ligase complex which mediates the ubiquitination and subsequent proteasomal degradation of target proteins. The sequence is that of Ankyrin repeat and SOCS box protein 17 (ASB17) from Macaca fascicularis (Crab-eating macaque).